The sequence spans 431 residues: MGKNVVVLGTQWGDEGKGKIVDLLTEKVSQVARFQGGHNAGHTLVIEGKKTVLHLIPSGILHDGVTCMIGNGVVLSPEALIKEIEELEANGVEVRSKLKLSPACPLILPYHVALDLARESKRGDAKIGTTGRGIGPAYEDKVSRRGLRLGDLLNEQRFAAKLAEVLEYHNFALTQYYGAEPVDYQEVLNKALELGAQLRPMIADVVDMLHTSRENGEHILFEGAQGSLLDIDHGTYPFVTSSNTTAGGTATGSGFGPLYLDYVLGITKAYTTRVGSGPFPTELECDVGKHLGEKGHEFGATTGRQRRTGWFDAVAVRHAVRINSMTGMCLTKLDVLDGLSEVKICVGYKDSNGAVIGIPCDAEGWADVQPVYESMPGWTASTVGAKTMEELPVEAVNYIRRLEELVGIPADIISTGPDRVETIVLRHPFEG.

GTP contacts are provided by residues 13–19 (GDEGKGK) and 41–43 (GHT). Asp14 (proton acceptor) is an active-site residue. Positions 14 and 41 each coordinate Mg(2+). Residues 14 to 17 (DEGK), 39 to 42 (NAGH), Thr130, Arg144, Gln225, Thr240, and Arg304 each bind IMP. The Proton donor role is filled by His42. 300–306 (ATTGRQR) serves as a coordination point for substrate. GTP-binding positions include Arg306, 332–334 (KLD), and 414–416 (STG).

Belongs to the adenylosuccinate synthetase family. As to quaternary structure, homodimer. Requires Mg(2+) as cofactor.

The protein localises to the cytoplasm. It catalyses the reaction IMP + L-aspartate + GTP = N(6)-(1,2-dicarboxyethyl)-AMP + GDP + phosphate + 2 H(+). It participates in purine metabolism; AMP biosynthesis via de novo pathway; AMP from IMP: step 1/2. Plays an important role in the de novo pathway of purine nucleotide biosynthesis. Catalyzes the first committed step in the biosynthesis of AMP from IMP. This Saccharophagus degradans (strain 2-40 / ATCC 43961 / DSM 17024) protein is Adenylosuccinate synthetase.